A 699-amino-acid polypeptide reads, in one-letter code: Elongation factor G (699 aa).

One can recognise a tr-type G domain in the interval 8 to 290 (ERYRNIGIMA…GVIEYLPSPV (283 aa)). GTP is bound by residues 17–24 (AHIDAGKT), 88–92 (DTPGH), and 142–145 (NKMD).

The protein belongs to the TRAFAC class translation factor GTPase superfamily. Classic translation factor GTPase family. EF-G/EF-2 subfamily.

It localises to the cytoplasm. Functionally, catalyzes the GTP-dependent ribosomal translocation step during translation elongation. During this step, the ribosome changes from the pre-translocational (PRE) to the post-translocational (POST) state as the newly formed A-site-bound peptidyl-tRNA and P-site-bound deacylated tRNA move to the P and E sites, respectively. Catalyzes the coordinated movement of the two tRNA molecules, the mRNA and conformational changes in the ribosome. This chain is Elongation factor G, found in Alkalilimnicola ehrlichii (strain ATCC BAA-1101 / DSM 17681 / MLHE-1).